The sequence spans 129 residues: uncharacterized protein (129 aa).

This is an uncharacterized protein from Clostridium perfringens (strain 13 / Type A).